A 383-amino-acid polypeptide reads, in one-letter code: Lipid-A-disaccharide synthase (383 aa).

It belongs to the LpxB family.

It carries out the reaction a lipid X + a UDP-2-N,3-O-bis[(3R)-3-hydroxyacyl]-alpha-D-glucosamine = a lipid A disaccharide + UDP + H(+). It functions in the pathway bacterial outer membrane biogenesis; LPS lipid A biosynthesis. In terms of biological role, condensation of UDP-2,3-diacylglucosamine and 2,3-diacylglucosamine-1-phosphate to form lipid A disaccharide, a precursor of lipid A, a phosphorylated glycolipid that anchors the lipopolysaccharide to the outer membrane of the cell. The protein is Lipid-A-disaccharide synthase of Aliivibrio fischeri (strain MJ11) (Vibrio fischeri).